Consider the following 442-residue polypeptide: Glycoprotein endo-alpha-1,2-mannosidase-like protein (442 aa).

The Cytoplasmic segment spans residues 1–8; it reads MNRLRRKA. The chain crosses the membrane as a helical; Signal-anchor for type II membrane protein span at residues 9–29; the sequence is CVALLLFTLFIFGTMMGLRTL. The Lumenal segment spans residues 30-442; that stretch reads KPTDGFSDLA…FSKEKEQWLM (413 aa).

Belongs to the glycosyl hydrolase 99 family.

It localises to the golgi apparatus membrane. The protein is Glycoprotein endo-alpha-1,2-mannosidase-like protein (maneal) of Danio rerio (Zebrafish).